A 489-amino-acid polypeptide reads, in one-letter code: MSPPLVIKNGTVVNEDGMFKADVLVRNGIIVEVSPNITALPDTEVIDATDRLVIPGGIDPHTHMQMPYMGEVTKDDFLKGTEAAVAGGTTMIIDFCCPDHRNGESLIAGYNRWRSWADPKVCCDYGLSVAITMWRPETAEQMAIITSPEFGVNSFKFYMAYENTLMVRDDELFRGMQECAKLRALARVHCENGSVIKEKEIDLLAKGVTGPEGHTQSRPEEIEAEATNRACVLAAQANCPVYIVHVMTKGAASAISHHRAQGSIVFGEPIAAGLALDGSHYYNEDWLHAARYVMSPPLSRDPTTPELLMKLLAAGELHLTGTDNCTYDCRQKSLGKGNFTKIPNGINGVEDRMSVVWEKGVHSGIIDPMRYVSITSSTAAKIFNIYPRKGRIAVGSDADIVIFNPNATRTISKDTHHHNLDFNIFEGINCHGVAEVTISRGRIVWAHGKLQTVPGSGKFIPLLANSPFVFSTHEKREQKIQPRIVERLE.

Positions 61, 63, and 156 each coordinate Zn(2+). At Lys-156 the chain carries N6-carboxylysine. A substrate-binding site is contributed by Tyr-161. His-189 and His-245 together coordinate Zn(2+). Ser-295 contributes to the substrate binding site. Residue Asp-323 coordinates Zn(2+). Substrate is bound at residue Asn-344.

Belongs to the metallo-dependent hydrolases superfamily. Hydantoinase/dihydropyrimidinase family. Homotetramer. Zn(2+) serves as cofactor. Carboxylation allows a single lysine to coordinate two zinc ions. In terms of tissue distribution, in L1-L2 larvae, expressed in body hypodermal cells, hemidesmosomes and in a neuronal cell between the pharynx and ring neuropil. In adults, expression is seen in body hypodermal cells and pharynx.

The protein localises to the nucleus. It carries out the reaction 5,6-dihydrouracil + H2O = 3-(carbamoylamino)propanoate + H(+). This Caenorhabditis elegans protein is Dihydropyrimidinase 1 (dhp-1).